A 348-amino-acid polypeptide reads, in one-letter code: Heat-inducible transcription repressor HrcA (348 aa).

This sequence belongs to the HrcA family.

Its function is as follows. Negative regulator of class I heat shock genes (grpE-dnaK-dnaJ and groELS operons). Prevents heat-shock induction of these operons. The chain is Heat-inducible transcription repressor HrcA from Syntrophobacter fumaroxidans (strain DSM 10017 / MPOB).